The chain runs to 550 residues: Hydroxylamine reductase (550 aa).

[4Fe-4S] cluster-binding residues include Cys-7, Cys-10, Cys-19, and Cys-25. Residues His-244, Glu-268, Cys-312, Cys-405, Cys-433, Cys-458, Glu-493, and Lys-495 each coordinate hybrid [4Fe-2O-2S] cluster. At Cys-405 the chain carries Cysteine persulfide.

This sequence belongs to the HCP family. [4Fe-4S] cluster serves as cofactor. Hybrid [4Fe-2O-2S] cluster is required as a cofactor.

It localises to the cytoplasm. The enzyme catalyses A + NH4(+) + H2O = hydroxylamine + AH2 + H(+). Catalyzes the reduction of hydroxylamine to form NH(3) and H(2)O. The polypeptide is Hydroxylamine reductase (Porphyromonas gingivalis (strain ATCC 33277 / DSM 20709 / CIP 103683 / JCM 12257 / NCTC 11834 / 2561)).